Consider the following 128-residue polypeptide: Holo-[acyl-carrier-protein] synthase (128 aa).

Residues D8 and E58 each coordinate Mg(2+).

It belongs to the P-Pant transferase superfamily. AcpS family. Mg(2+) serves as cofactor.

The protein localises to the cytoplasm. It carries out the reaction apo-[ACP] + CoA = holo-[ACP] + adenosine 3',5'-bisphosphate + H(+). Its function is as follows. Transfers the 4'-phosphopantetheine moiety from coenzyme A to a Ser of acyl-carrier-protein. This chain is Holo-[acyl-carrier-protein] synthase, found in Alkalilimnicola ehrlichii (strain ATCC BAA-1101 / DSM 17681 / MLHE-1).